Reading from the N-terminus, the 122-residue chain is Large ribosomal subunit protein uL14 (122 aa).

Belongs to the universal ribosomal protein uL14 family. As to quaternary structure, part of the 50S ribosomal subunit. Forms a cluster with proteins L3 and L19. In the 70S ribosome, L14 and L19 interact and together make contacts with the 16S rRNA in bridges B5 and B8.

Functionally, binds to 23S rRNA. Forms part of two intersubunit bridges in the 70S ribosome. The sequence is that of Large ribosomal subunit protein uL14 from Protochlamydia amoebophila (strain UWE25).